The following is a 156-amino-acid chain: MIP18 family protein galla-2 (156 aa).

This sequence belongs to the MIP18 family. As to quaternary structure, component of the CGX complex composed of crb, galla (galla-1 or galla-2) and Xpd. Interacts with crb (via intracellular domain). Also able to interact with Xpd in the absence of crb. Interacts with Mms19.

In terms of biological role, component of the crb-galla-Xpd (CGX) complex which is essential for proper mitotic chromosome segregation in early embryos. The CGX complex is also required for cell proliferation in developing wing disks. In the CGX complex, acts with crb to recruit Xpd thus forming the functional complex. This Drosophila melanogaster (Fruit fly) protein is MIP18 family protein galla-2.